A 944-amino-acid polypeptide reads, in one-letter code: Bifunctional glutamine synthetase adenylyltransferase/adenylyl-removing enzyme (944 aa).

An adenylyl removase region spans residues 1–440; that stretch reads MSANSVFQQL…IFTQLIGEDD (440 aa). An adenylyl transferase region spans residues 448–944; sequence VSEFKRLWLL…LSSKQKWLDE (497 aa).

It belongs to the GlnE family. It depends on Mg(2+) as a cofactor.

It catalyses the reaction [glutamine synthetase]-O(4)-(5'-adenylyl)-L-tyrosine + phosphate = [glutamine synthetase]-L-tyrosine + ADP. The catalysed reaction is [glutamine synthetase]-L-tyrosine + ATP = [glutamine synthetase]-O(4)-(5'-adenylyl)-L-tyrosine + diphosphate. In terms of biological role, involved in the regulation of glutamine synthetase GlnA, a key enzyme in the process to assimilate ammonia. When cellular nitrogen levels are high, the C-terminal adenylyl transferase (AT) inactivates GlnA by covalent transfer of an adenylyl group from ATP to specific tyrosine residue of GlnA, thus reducing its activity. Conversely, when nitrogen levels are low, the N-terminal adenylyl removase (AR) activates GlnA by removing the adenylyl group by phosphorolysis, increasing its activity. The regulatory region of GlnE binds the signal transduction protein PII (GlnB) which indicates the nitrogen status of the cell. In Proteus mirabilis (strain HI4320), this protein is Bifunctional glutamine synthetase adenylyltransferase/adenylyl-removing enzyme.